We begin with the raw amino-acid sequence, 614 residues long: Cathepsin F (614 aa).

The first 20 residues, 1–20 (MRLFAAATVALVLLLGQAAG), serve as a signal peptide directing secretion. The propeptide at 21–393 (EELAEERAGQ…AAVVPAYHGE (373 aa)) is activation peptide. The disordered stretch occupies residues 25 to 50 (EERAGQAQGDAESTESSETTTDQAVS). Over residues 29-45 (GQAQGDAESTESSETTT) the composition is skewed to low complexity. N151 carries N-linked (GlcNAc...) asparagine glycosylation. 2 cysteine pairs are disulfide-bonded: C415-C456 and C449-C489. C418 is a catalytic residue. N-linked (GlcNAc...) asparagine glycosylation is found at N492 and N510. A disulfide bridge connects residues C548 and C602. Active-site residues include H555 and N581.

This sequence belongs to the peptidase C1 family.

The enzyme catalyses The recombinant enzyme cleaves synthetic substrates with Phe and Leu (better than Val) in P2, with high specificity constant (kcat/Km) comparable to that of cathepsin L.. Functionally, may have a role in autophagic cell death. This Drosophila melanogaster (Fruit fly) protein is Cathepsin F.